The chain runs to 350 residues: Outer membrane porin PhoE (350 aa).

Positions 1 to 21 (MKKSTLALVVMGVVASASVHA) are cleaved as a signal peptide.

Belongs to the Gram-negative porin family. Homotrimer.

It is found in the cell outer membrane. In terms of biological role, uptake of inorganic phosphate, phosphorylated compounds, and some other negatively charged solutes. The chain is Outer membrane porin PhoE (phoE) from Enterobacter cloacae.